The sequence spans 354 residues: MSLDKIMNEAISPWMKGDGPDSDIVLSSRIRLARNFKQYQFSTMQNEEEAQKVQELFKKKFINKAVEPFGKFGLLKMNELTPLQRRVLVEKHLISPNLAGTEYGACLLSESEHISVMLNEEDHIRIQCLFPGLQLSKALQSANQIDNWIEKEVEYAFDESLGYITSCPTNVGTGLRASVMIHLPGLVLTKRISRIIQVIQKLGLVVRGIYGEGSEALGNIFQVSNQMTLGKSEEDIIADLKSVMQQIIQQEKLARELIVQNSSIELEDKVYRSYGILANSRLIQSAEAATCLSDVRLGIDLGYIKGISRNILTELMVLTQPGILQQYAGGPLGPEERDYRRATLIRERLRIEKN.

One can recognise a Phosphagen kinase C-terminal domain in the interval 24–254; it reads IVLSSRIRLA…QQIIQQEKLA (231 aa). ATP contacts are provided by residues 27–31, His-92, Arg-125, 176–180, and 207–212; these read SSRIR, RASVM, and RGIYGE. Positions 337–342 match the RDXXRA motif of the pArg binding pocket involved in allosteric regulation motif; sequence RDYRRA.

Belongs to the ATP:guanido phosphotransferase family.

It catalyses the reaction L-arginyl-[protein] + ATP = N(omega)-phospho-L-arginyl-[protein] + ADP + H(+). Its activity is regulated as follows. Appears to be allosterically activated by the binding of pArg-containing polypeptides to the pArg-binding pocket localized in the C-terminal domain of McsB. Its function is as follows. Catalyzes the specific phosphorylation of arginine residues in a large number of proteins. Is part of the bacterial stress response system. Protein arginine phosphorylation has a physiologically important role and is involved in the regulation of many critical cellular processes, such as protein homeostasis, motility, competence, and stringent and stress responses, by regulating gene expression and protein activity. The protein is Protein-arginine kinase of Bacillus cereus (strain B4264).